Reading from the N-terminus, the 104-residue chain is N(4)-acetylcytidine amidohydrolase (104 aa).

Residues 6–101 (TFFERFEHDI…EQLYMIRFKV (96 aa)) enclose the ASCH domain. Lysine 20 (proton acceptor) is an active-site residue. Threonine 23 serves as the catalytic Nucleophile. Glutamate 73 acts as the Proton donor in catalysis.

This sequence belongs to the N(4)-acetylcytidine amidohydrolase family.

The enzyme catalyses N(4)-acetylcytidine + H2O = cytidine + acetate + H(+). It catalyses the reaction N(4)-acetyl-2'-deoxycytidine + H2O = 2'-deoxycytidine + acetate + H(+). The catalysed reaction is N(4)-acetylcytosine + H2O = cytosine + acetate + H(+). Catalyzes the hydrolysis of N(4)-acetylcytidine (ac4C). The sequence is that of N(4)-acetylcytidine amidohydrolase from Shewanella oneidensis (strain ATCC 700550 / JCM 31522 / CIP 106686 / LMG 19005 / NCIMB 14063 / MR-1).